Consider the following 451-residue polypeptide: Cobyrinate a,c-diamide synthase (451 aa).

The 192-residue stretch at 246–437 folds into the GATase cobBQ-type domain; the sequence is KIGVAYDEVF…VHTHVAAMPN (192 aa). Cysteine 328 (nucleophile) is an active-site residue.

Belongs to the CobB/CbiA family. The cofactor is Mg(2+).

It catalyses the reaction cob(II)yrinate + 2 L-glutamine + 2 ATP + 2 H2O = cob(II)yrinate a,c diamide + 2 L-glutamate + 2 ADP + 2 phosphate + 2 H(+). The catalysed reaction is Ni-sirohydrochlorin + 2 L-glutamine + 2 ATP + 2 H2O = Ni-sirohydrochlorin a,c-diamide + 2 L-glutamate + 2 ADP + 2 phosphate + 2 H(+). Its pathway is cofactor biosynthesis; adenosylcobalamin biosynthesis; cob(II)yrinate a,c-diamide from sirohydrochlorin (anaerobic route): step 10/10. Its function is as follows. Catalyzes the ATP-dependent amidation of the two carboxylate groups at positions a and c of cobyrinate, using either L-glutamine or ammonia as the nitrogen source. Involved in the biosynthesis of the unique nickel-containing tetrapyrrole coenzyme F430, the prosthetic group of methyl-coenzyme M reductase (MCR), which plays a key role in methanogenesis and anaerobic methane oxidation. Catalyzes the ATP-dependent amidation of the two carboxylate groups at positions a and c of Ni-sirohydrochlorin, using L-glutamine or ammonia as the nitrogen source. The chain is Cobyrinate a,c-diamide synthase from Methanobrevibacter smithii (strain ATCC 35061 / DSM 861 / OCM 144 / PS).